Here is a 261-residue protein sequence, read N- to C-terminus: MALLQLEGIGAHYPGAAAPVLENINLSLGPQQLLVALGPSGSGKTSLLNLIAGFVTPSGGRITLDGSAVEGPGAERGVVFQDNALLPWQDVLANVAFGLELAGVSRSEREAKAREMLALVDLIGFEQRRIWELSGGQRQRVGLARALAADPRILLMDEPFGALDAFTREQMQELLLQVWQRTAKPVFLITHDIEEAVFLATDLILLAPDPGRIAQHLQLDFGRRYSAGESARAIKSDPGFIETREQVLASVFAQRAGEQRA.

The ABC transporter domain maps to 4-233; the sequence is LQLEGIGAHY…RYSAGESARA (230 aa). ATP is bound at residue 38 to 45; sequence GPSGSGKT.

The protein belongs to the ABC transporter superfamily. Taurine importer (TC 3.A.1.17.1) family. In terms of assembly, the complex is composed of two ATP-binding proteins (TauB), two transmembrane proteins (TauC) and a solute-binding protein (TauA).

The protein resides in the cell inner membrane. It carries out the reaction taurine(out) + ATP + H2O = taurine(in) + ADP + phosphate + H(+). Functionally, part of the ABC transporter complex TauABC involved in taurine import. Responsible for energy coupling to the transport system. The sequence is that of Taurine import ATP-binding protein TauB from Pseudomonas syringae pv. tomato (strain ATCC BAA-871 / DC3000).